The primary structure comprises 219 residues: UPF0619 GPI-anchored membrane protein AFUA_3G00880 (219 aa).

A signal peptide spans 1-16 (MRFALTLTAFVGSVAA). An N-linked (GlcNAc...) asparagine glycan is attached at Asn85. 2 disordered regions span residues 107 to 144 (SQQF…GTVS) and 160 to 205 (SSTL…SLTV). The segment covering 114 to 144 (SSGSSTTSDSTSSASATGSASTSSSSTGTVS) has biased composition (low complexity). The GPI-like-anchor amidated asparagine moiety is linked to residue Asn198. Positions 199-219 (GAGSLTVPAGSLLLGLVALAL) are cleaved as a propeptide — removed in mature form.

This sequence belongs to the UPF0619 family. Post-translationally, the GPI-like anchor contains a phosphoceramide lipid group. The anchor position has not been determined.

The protein localises to the cell membrane. The protein is UPF0619 GPI-anchored membrane protein AFUA_3G00880 of Aspergillus fumigatus (strain ATCC MYA-4609 / CBS 101355 / FGSC A1100 / Af293) (Neosartorya fumigata).